A 406-amino-acid chain; its full sequence is MATPGNLGSSVLASKTKTKKKHFVAQKVKLFRASDPLLSVLMWGVNHSINELSHVQIPVMLMPDDFKAYSKIKVDNHLFNKENMPSHFKFKEYCPMVFRNLRERFGIDDQDFQNSLTRSAPLPNDSXARSGARFHTSYDRRYVIKTITSEDVAEMHNILKNYHQHIVECHGITLLPQFLGMYRLNVDGVEIYVIVTRNVFSHRLSVYRKYDLKGSTVAREASDKEKAKELPTLKDNDFINEGQKIYIDDNXKKVFLEKLKKDVEFLAQLKLMDYSLLVGIHDVERAEQEEVECEENDGEEEGESDGTHPVGTPPDSPGNTLNSSPPLAPGEFDPNIDVYGIKCHENSPRKEVYFMAIIDILTHYDAKKKAAHAAKXVKHGAGAEISTVNPEQYSKRFLDFIGHILT.

An N-acetylalanine modification is found at alanine 2. Residue threonine 3 is modified to Phosphothreonine. Residue serine 14 is modified to Phosphoserine. The region spanning 33-405 is the PIPK domain; sequence ASDPLLSVLM…RFLDFIGHIL (373 aa). The segment at 59–65 is required for interaction with PIP5K1A; sequence VMLMPDD. Residues lysine 89 and lysine 145 each carry the N6-acetyllysine modification. A disordered region spans residues 288-329; that stretch reads QEEVECEENDGEEEGESDGTHPVGTPPDSPGNTLNSSPPLAP. Residues 289–304 show a composition bias toward acidic residues; the sequence is EEVECEENDGEEEGES.

As to quaternary structure, homodimer. Interacts with PIP4K2B; the interaction may regulate localization to the nucleus. Probably interacts with PIP5K1A; the interaction inhibits PIP5K1A kinase activity. Phosphorylated in tyrosines. Phosphorylation is induced by light and increases kinase activity.

Its subcellular location is the cell membrane. It localises to the nucleus. It is found in the lysosome. The protein localises to the cytoplasm. The protein resides in the photoreceptor inner segment. Its subcellular location is the cell projection. It localises to the cilium. It is found in the photoreceptor outer segment. The catalysed reaction is a 1,2-diacyl-sn-glycero-3-phospho-(1D-myo-inositol-5-phosphate) + ATP = a 1,2-diacyl-sn-glycero-3-phospho-(1D-myo-inositol-4,5-bisphosphate) + ADP + H(+). It carries out the reaction 1,2-dihexadecanoyl-sn-glycero-3-phospho-(1D-myo-inositol-5-phosphate) + ATP = 1,2-dihexadecanoyl-sn-glycero-3-phospho-(1D-myo-inositol-4,5-bisphosphate) + ADP + H(+). The enzyme catalyses 1,2-dihexadecanoyl-sn-glycero-3-phospho-(1D-myo-inositol-5-phosphate) + GTP = 1,2-dihexadecanoyl-sn-glycero-3-phospho-(1D-myo-inositol-4,5-bisphosphate) + GDP + H(+). Its activity is regulated as follows. In rod outer segments, activated by light. Its function is as follows. Catalyzes the phosphorylation of phosphatidylinositol 5-phosphate (PtdIns5P) on the fourth hydroxyl of the myo-inositol ring, to form phosphatidylinositol 4,5-bisphosphate (PtdIns(4,5)P2). Has both ATP- and GTP-dependent kinase activities. May exert its function by regulating the levels of PtdIns5P, which functions in the cytosol by increasing AKT activity and in the nucleus signals through ING2. May regulate the pool of cytosolic PtdIns5P in response to the activation of tyrosine phosphorylation. May be involved in thrombopoiesis, and the terminal maturation of megakaryocytes and regulation of their size. May negatively regulate insulin-stimulated glucose uptake by lowering the levels of PtdIns5P. The chain is Phosphatidylinositol 5-phosphate 4-kinase type-2 alpha (PIP4K2A) from Sus scrofa (Pig).